A 118-amino-acid polypeptide reads, in one-letter code: Cell division protein FtsB (118 aa).

Over 1 to 3 (MRL) the chain is Cytoplasmic. Residues 4 to 21 (LFLVLLVLLGLIQYPLWL) traverse the membrane as a helical segment. Residues 22 to 118 (GKGGWFKVWD…PRPPATPPRR (97 aa)) lie on the Periplasmic side of the membrane. Residues 28 to 62 (KVWDLQRQVAEQRETNDGLRARNTALEAEVRDLAT) are a coiled coil. The tract at residues 88–118 (LPPGTPLPSDNSTPQASALSKPRPPATPPRR) is disordered. Residues 95-105 (PSDNSTPQASA) show a composition bias toward polar residues. A compositionally biased stretch (pro residues) spans 109–118 (PRPPATPPRR).

It belongs to the FtsB family. Part of a complex composed of FtsB, FtsL and FtsQ.

It is found in the cell inner membrane. Functionally, essential cell division protein. May link together the upstream cell division proteins, which are predominantly cytoplasmic, with the downstream cell division proteins, which are predominantly periplasmic. The protein is Cell division protein FtsB of Bordetella bronchiseptica (strain ATCC BAA-588 / NCTC 13252 / RB50) (Alcaligenes bronchisepticus).